The following is a 164-amino-acid chain: Galectin-3 (164 aa).

A Galectin domain is found at 9-154 (STVDLSEPLK…FSDVLGVTVL (146 aa)). Residues His-60, Arg-64, Asn-73, and Glu-84 each coordinate a carbohydrate.

Homotetramer. Oligomerization is required for carbohydrate binding.

It is found in the secreted. Its subcellular location is the extracellular space. The protein localises to the extracellular matrix. It localises to the cell wall. In terms of biological role, binds lactose. May play a role in fruiting body formation. The sequence is that of Galectin-3 (Cgl3) from Coprinopsis cinerea (strain Okayama-7 / 130 / ATCC MYA-4618 / FGSC 9003) (Inky cap fungus).